We begin with the raw amino-acid sequence, 702 residues long: Phosphoglycerol transferase I (702 aa).

A run of 3 helical transmembrane segments spans residues 5-24, 73-95, and 102-124; these read LLVS…RLAW, GYIA…VRIR, and GGGA…SPLY.

The protein belongs to the OpgB family.

The protein localises to the cell inner membrane. It carries out the reaction a phosphatidylglycerol + a membrane-derived-oligosaccharide D-glucose = a 1,2-diacyl-sn-glycerol + a membrane-derived-oligosaccharide 6-(glycerophospho)-D-glucose.. It functions in the pathway glycan metabolism; osmoregulated periplasmic glucan (OPG) biosynthesis. In terms of biological role, transfers a phosphoglycerol residue from phosphatidylglycerol to the membrane-bound nascent glucan backbones. This chain is Phosphoglycerol transferase I, found in Xanthomonas axonopodis pv. citri (strain 306).